A 451-amino-acid polypeptide reads, in one-letter code: CBL-interacting protein kinase 10 (451 aa).

Positions 13–267 constitute a Protein kinase domain; the sequence is YEIGKLLGQG…VSEIMEDPWF (255 aa). Residues 19–27 and lysine 42 contribute to the ATP site; that span reads LGQGSFAKV. Residue aspartate 135 is the Proton acceptor of the active site. The activation loop stretch occupies residues 153-182; sequence DFGLSALAECKRQDGLLHTTCGTPAYVAPE. Residues 304 to 336 form the NAF domain; it reads INEGKQEAENLTSLNAFDIISLSSGFDLSAMFE. The interval 341-370 is PPI; it reads KEESKFTSTNTATTITKKLEDVAKNLRLKF.

This sequence belongs to the protein kinase superfamily. CAMK Ser/Thr protein kinase family. SNF1 subfamily. Mn(2+) is required as a cofactor.

The enzyme catalyses L-seryl-[protein] + ATP = O-phospho-L-seryl-[protein] + ADP + H(+). It carries out the reaction L-threonyl-[protein] + ATP = O-phospho-L-threonyl-[protein] + ADP + H(+). Functionally, CIPK serine-threonine protein kinases interact with CBL proteins. Binding of a CBL protein to the regulatory NAF domain of CIPK protein lead to the activation of the kinase in a calcium-dependent manner. This Oryza sativa subsp. japonica (Rice) protein is CBL-interacting protein kinase 10 (CIPK10).